A 344-amino-acid chain; its full sequence is Heat-inducible transcription repressor HrcA (344 aa).

It belongs to the HrcA family.

Its function is as follows. Negative regulator of class I heat shock genes (grpE-dnaK-dnaJ and groELS operons). Prevents heat-shock induction of these operons. This chain is Heat-inducible transcription repressor HrcA, found in Streptococcus pneumoniae serotype 19F (strain G54).